We begin with the raw amino-acid sequence, 391 residues long: Tumor susceptibility gene 101 protein (391 aa).

At Ala2 the chain carries N-acetylalanine. Residues 2 to 145 (AVSESQLKKM…GEEPPVFSRP (144 aa)) form the UEV domain. The interval 159–163 (PPNTS) is interaction with CEP55. Residues 197–220 (YPATTSSQYPSQPPVTTVGPSRDG) form a disordered region. Polar residues predominate over residues 200–215 (TTSSQYPSQPPVTTVG). Thr221 carries the phosphothreonine modification. Positions 237-317 (DKLRWRMKEE…NQSENNDIDE (81 aa)) form a coiled coil. The PTAP/PSAP motif signature appears at 321 to 324 (PTAP). One can recognise an SB domain in the interval 323 to 391 (APLYKQILNL…RKTAGLSDLY (69 aa)).

Belongs to the ubiquitin-conjugating enzyme family. UEV subfamily. In terms of assembly, component of the ESCRT-I complex (endosomal sorting complex required for transport I) which consists of TSG101, VPS28, a VPS37 protein (VPS37A to -D) and MVB12A or MVB12B in a 1:1:1:1 stoichiometry. Interacts with VPS37A, VPS37B and VPS37C. Component of an ESCRT-I complex (endosomal sorting complex required for transport I) which consists of TSG101, VPS28, VPS37A and UBAP1 in a 1:1:1:1 stoichiometry. Interacts with DMAP1. Interacts with GMCL. Interacts with ubiquitin, stathmin and AATF. Interacts with HGS; the interaction mediates the association with the ESCRT-0 complex. Interacts with GGA1 and GGA3. Interacts (via UEV domain) with PDCD6IP/AIP1. Interacts with VPS28, SNF8 and VPS36. Self-associates. Interacts with MVB12A; the association appears to be mediated by the TSG101-VPS37 binary subcomplex. Interacts with VPS37D. Interacts with LRSAM1. Interacts with CEP55; the interaction is required for cytokinesis. Interacts with PDCD6. Interacts with LITAF. Interacts with murine leukemia virus Gag polyprotein (via PSAP motif). Interacts with MGRN1. Interacts with ARRDC1; recruits TSG101 to the plasma membrane. In terms of processing, monoubiquitinated at multiple sites by LRSAM1 and by MGRN1. Ubiquitination inactivates it, possibly by regulating its shuttling between an active membrane-bound protein and an inactive soluble form. Ubiquitination by MGRN1 requires the presence of UBE2D1. In terms of tissue distribution, ubiquitous. Higher expression in brain and mammary gland. Lower expression in liver and tumoral tissues.

It localises to the cytoplasm. The protein resides in the early endosome membrane. It is found in the late endosome membrane. The protein localises to the cytoskeleton. Its subcellular location is the microtubule organizing center. It localises to the centrosome. The protein resides in the midbody. It is found in the midbody ring. The protein localises to the nucleus. Component of the ESCRT-I complex, a regulator of vesicular trafficking process. Binds to ubiquitinated cargo proteins and is required for the sorting of endocytic ubiquitinated cargos into multivesicular bodies (MVBs). Mediates the association between the ESCRT-0 and ESCRT-I complex. Required for completion of cytokinesis; the function requires CEP55. May be involved in cell growth and differentiation. Acts as a negative growth regulator. Required for the exosomal release of SDCBP, CD63 and syndecan. It may also play a role in the extracellular release of microvesicles that differ from the exosomes. The polypeptide is Tumor susceptibility gene 101 protein (Tsg101) (Mus musculus (Mouse)).